The chain runs to 337 residues: Transaldolase (337 aa).

The Nuclear localization signal signature appears at 1 to 10 (MSGSPVKRQR). Lys115 carries the N6-acetyllysine modification. The Schiff-base intermediate with substrate role is filled by Lys142. Residue Lys219 is modified to N6-acetyllysine. Ser237 and Ser256 each carry phosphoserine. An N6-acetyllysine mark is found at Lys269, Lys286, and Lys321.

The protein belongs to the transaldolase family. Type 1 subfamily. Homodimer. Interacts with KPNA1 and KPNA4.

Its subcellular location is the nucleus. It is found in the cytoplasm. It carries out the reaction D-sedoheptulose 7-phosphate + D-glyceraldehyde 3-phosphate = D-erythrose 4-phosphate + beta-D-fructose 6-phosphate. It participates in carbohydrate degradation; pentose phosphate pathway; D-glyceraldehyde 3-phosphate and beta-D-fructose 6-phosphate from D-ribose 5-phosphate and D-xylulose 5-phosphate (non-oxidative stage): step 2/3. Its function is as follows. Catalyzes the rate-limiting step of the non-oxidative phase in the pentose phosphate pathway. Catalyzes the reversible conversion of sedheptulose-7-phosphate and D-glyceraldehyde 3-phosphate into erythrose-4-phosphate and beta-D-fructose 6-phosphate. The chain is Transaldolase (Taldo1) from Rattus norvegicus (Rat).